The chain runs to 364 residues: Glutamate 5-kinase (364 aa).

Position 7 (lysine 7) interacts with ATP. 3 residues coordinate substrate: serine 47, aspartate 134, and asparagine 146. ATP-binding positions include 166 to 167 (TD) and 209 to 215 (TGGIKTK). Residues 274–349 (QGTLHVDDGA…NRIKSTQYPV (76 aa)) form the PUA domain.

It belongs to the glutamate 5-kinase family.

It is found in the cytoplasm. It carries out the reaction L-glutamate + ATP = L-glutamyl 5-phosphate + ADP. The protein operates within amino-acid biosynthesis; L-proline biosynthesis; L-glutamate 5-semialdehyde from L-glutamate: step 1/2. In terms of biological role, catalyzes the transfer of a phosphate group to glutamate to form L-glutamate 5-phosphate. The protein is Glutamate 5-kinase of Prochlorococcus marinus (strain SARG / CCMP1375 / SS120).